Consider the following 498-residue polypeptide: Signal recognition particle receptor FtsY (498 aa).

Disordered stretches follow at residues 1-130 (MGLF…PNQS) and 147-200 (KVES…YNRS). Low complexity predominate over residues 36–46 (ALLAETAETAE). Over residues 103-120 (SENSVAAVQNNTETMPSQ) the composition is skewed to polar residues. GTP contacts are provided by residues 301–308 (GVNGVGKT), 383–387 (DTAGR), and 447–450 (TKID).

It belongs to the GTP-binding SRP family. FtsY subfamily. As to quaternary structure, part of the signal recognition particle protein translocation system, which is composed of SRP and FtsY.

It localises to the cell membrane. Its subcellular location is the cytoplasm. The catalysed reaction is GTP + H2O = GDP + phosphate + H(+). Its function is as follows. Involved in targeting and insertion of nascent membrane proteins into the cytoplasmic membrane. Acts as a receptor for the complex formed by the signal recognition particle (SRP) and the ribosome-nascent chain (RNC). The protein is Signal recognition particle receptor FtsY of Streptococcus mutans serotype c (strain ATCC 700610 / UA159).